The sequence spans 127 residues: Fumarate reductase subunit C (127 aa).

Helical transmembrane passes span alanine 30–valine 50, glycine 58–glycine 78, and isoleucine 107–valine 127.

It belongs to the FrdC family. Part of an enzyme complex containing four subunits: a flavoprotein (FrdA), an iron-sulfur protein (FrdB), and two hydrophobic anchor proteins (FrdC and FrdD).

Its subcellular location is the cell inner membrane. Anchors the catalytic components of the fumarate reductase complex to the cell membrane, binds quinones. The protein is Fumarate reductase subunit C of Vibrio atlanticus (strain LGP32) (Vibrio splendidus (strain Mel32)).